A 33-amino-acid polypeptide reads, in one-letter code: ATP synthase 27 kDa subunit, mitochondrial (33 aa).

The protein localises to the mitochondrion. It localises to the mitochondrion inner membrane. Functionally, mitochondrial membrane ATP synthase (F(1)F(0) ATP synthase or Complex V) produces ATP from ADP in the presence of a proton gradient across the membrane which is generated by electron transport complexes of the respiratory chain. F-type ATPases consist of two structural domains, F(1) - containing the extramembraneous catalytic core and F(0) - containing the membrane proton channel, linked together by a central stalk and a peripheral stalk. During catalysis, ATP synthesis in the catalytic domain of F(1) is coupled via a rotary mechanism of the central stalk subunits to proton translocation. Part of the complex F(0) domain. In Solanum tuberosum (Potato), this protein is ATP synthase 27 kDa subunit, mitochondrial.